Reading from the N-terminus, the 296-residue chain is Small ribosomal subunit biogenesis GTPase RsgA (296 aa).

Residues 63 to 224 (KNQLVRPMVA…IADTPGFSSY (162 aa)) form the CP-type G domain. GTP is bound by residues 112-115 (SKTD) and 167-175 (GQTGAGKST). Zn(2+) contacts are provided by Cys248, Cys253, His255, and Cys261.

Belongs to the TRAFAC class YlqF/YawG GTPase family. RsgA subfamily. Monomer. Associates with 30S ribosomal subunit, binds 16S rRNA. Zn(2+) serves as cofactor.

The protein resides in the cytoplasm. Its function is as follows. One of several proteins that assist in the late maturation steps of the functional core of the 30S ribosomal subunit. Helps release RbfA from mature subunits. May play a role in the assembly of ribosomal proteins into the subunit. Circularly permuted GTPase that catalyzes slow GTP hydrolysis, GTPase activity is stimulated by the 30S ribosomal subunit. This is Small ribosomal subunit biogenesis GTPase RsgA from Limosilactobacillus fermentum (strain NBRC 3956 / LMG 18251) (Lactobacillus fermentum).